Consider the following 1898-residue polypeptide: Protein NYNRIN (1898 aa).

Disordered stretches follow at residues 289–315 (SNNQDGMDSAQEEGTVQATSSQDSTNH), 424–450 (LPSAESPAGRPDGGLGGEAALQNCPRP), 467–533 (DVKD…TDQS), 618–691 (EPTT…TDAG), and 711–731 (VSLLKGQGQAGRQGPQSSGTL). Residues 618–627 (EPTTPKTPQA) show a composition bias toward polar residues. Over residues 649–672 (PAATVSKAPAASKAPAAPKVPVTP) the composition is skewed to low complexity. Positions 792–942 (LRRVVIDGSS…LGRDGPTLDE (151 aa)) constitute an RNase NYN domain. The interval 968–1019 (SASVTELSDDADSGPLESLPNMEEVREEKEERQDEEQRQGQGTQKAAEEDDL) is disordered. Basic and acidic residues predominate over residues 990–1005 (EEVREEKEERQDEEQR). The RNase H type-1 domain occupies 1304-1450 (LSTFVCIHMS…VDTLAKQGAQ (147 aa)). The next 2 membrane-spanning stretches (helical) occupy residues 1372 to 1392 (VVFLTHCNWIFSLLWELLPLW) and 1408 to 1428 (PSLLSYIISLTSGLSSLPFIY). The Integrase catalytic domain maps to 1609–1774 (RSTAPWSNLQ…ESRLTEPLWW (166 aa)).

Its subcellular location is the membrane. The polypeptide is Protein NYNRIN (NYNRIN) (Homo sapiens (Human)).